A 577-amino-acid chain; its full sequence is Proline--tRNA ligase (577 aa).

The protein belongs to the class-II aminoacyl-tRNA synthetase family. ProS type 1 subfamily. Homodimer.

It localises to the cytoplasm. It carries out the reaction tRNA(Pro) + L-proline + ATP = L-prolyl-tRNA(Pro) + AMP + diphosphate. Functionally, catalyzes the attachment of proline to tRNA(Pro) in a two-step reaction: proline is first activated by ATP to form Pro-AMP and then transferred to the acceptor end of tRNA(Pro). As ProRS can inadvertently accommodate and process non-cognate amino acids such as alanine and cysteine, to avoid such errors it has two additional distinct editing activities against alanine. One activity is designated as 'pretransfer' editing and involves the tRNA(Pro)-independent hydrolysis of activated Ala-AMP. The other activity is designated 'posttransfer' editing and involves deacylation of mischarged Ala-tRNA(Pro). The misacylated Cys-tRNA(Pro) is not edited by ProRS. The sequence is that of Proline--tRNA ligase from Limosilactobacillus reuteri (strain DSM 20016) (Lactobacillus reuteri).